The primary structure comprises 478 residues: tRNA(Ile)-lysidine synthase (478 aa).

ATP is bound at residue 27–32 (SGGSDS).

It belongs to the tRNA(Ile)-lysidine synthase family.

It is found in the cytoplasm. The catalysed reaction is cytidine(34) in tRNA(Ile2) + L-lysine + ATP = lysidine(34) in tRNA(Ile2) + AMP + diphosphate + H(+). Functionally, ligates lysine onto the cytidine present at position 34 of the AUA codon-specific tRNA(Ile) that contains the anticodon CAU, in an ATP-dependent manner. Cytidine is converted to lysidine, thus changing the amino acid specificity of the tRNA from methionine to isoleucine. This Rickettsia rickettsii (strain Iowa) protein is tRNA(Ile)-lysidine synthase.